Reading from the N-terminus, the 1363-residue chain is Spike glycoprotein (1363 aa).

The signal sequence occupies residues 1-13 (MFLILLISLPTAF). The Extracellular portion of the chain corresponds to 14–1307 (AVIGDLKCTT…GTYEYYVKWP (1294 aa)). Residues 15 to 298 (VIGDLKCTTV…DFMSEIKCKT (284 aa)) enclose the BetaCoV S1-NTD domain. 5 cysteine pairs are disulfide-bonded: Cys-21–Cys-165, Cys-160–Cys-193, Cys-172–Cys-252, Cys-286–Cys-296, and Cys-331–Cys-356. Residues Asn-59 and Asn-133 are each glycosylated (N-linked (GlcNAc...) asparagine; by host). The N-linked (GlcNAc...) asparagine; by host glycan is linked to Asn-198. The BetaCoV S1-CTD domain maps to 329–617 (PDCNIEAWLN…DVNSGTTCST (289 aa)). N-linked (GlcNAc...) asparagine; by host glycosylation is present at Asn-359. Cystine bridges form between Cys-374/Cys-427 and Cys-386/Cys-615. 7 N-linked (GlcNAc...) asparagine; by host glycosylation sites follow: Asn-437, Asn-649, Asn-676, Asn-696, Asn-714, Asn-739, and Asn-788. Fusion peptide stretches follow at residues 914–935 (SAIE…VEAY) and 933–953 (EAYN…VQSY). Asn-937 is a glycosylation site (N-linked (GlcNAc...) asparagine; by host). A disulfide bond links Cys-938 and Cys-949. Residues 1014-1064 (QKLIANAFNNALGAIQEGFDATNSALVKIQAVVNANAEALNNLLQQLSNRF) are heptad repeat 1. A coiled-coil region spans residues 1043 to 1087 (QAVVNANAEALNNLLQQLSNRFGAISSSLQEILSRLDALEAQAQI). N-linked (GlcNAc...) asparagine; by host glycans are attached at residues Asn-1194, Asn-1224, Asn-1234, Asn-1253, Asn-1267, and Asn-1288. Residues 1258 to 1296 (APDLSLDYINVTFLDLQDEMNRLQEAIKVLNQSYINLKD) are heptad repeat 2. The stretch at 1269–1297 (TFLDLQDEMNRLQEAIKVLNQSYINLKDI) forms a coiled coil. A helical membrane pass occupies residues 1308 to 1328 (WYVWLLIGFAGVAMLVLLFFI). Residues 1329–1363 (CCCTGCGTSCFKKCGGCCDDYTGHQELVIKTSHED) lie on the Cytoplasmic side of the membrane. The short motif at 1359-1363 (TSHED) is the KxHxx element.

This sequence belongs to the betacoronaviruses spike protein family. As to quaternary structure, homotrimer; each monomer consists of a S1 and a S2 subunit. The resulting peplomers protrude from the virus surface as spikes. In terms of processing, specific enzymatic cleavages in vivo yield mature proteins. The precursor is processed into S1 and S2 by host cell furin or another cellular protease to yield the mature S1 and S2 proteins. Additionally, a second cleavage leads to the release of a fusion peptide after viral attachment to host cell receptor. Post-translationally, the cytoplasmic Cys-rich domain is palmitoylated. Spike glycoprotein is digested within host endosomes.

It is found in the virion membrane. Its subcellular location is the host endoplasmic reticulum-Golgi intermediate compartment membrane. The protein localises to the host cell membrane. Attaches the virion to the cell membrane by interacting with host receptor, initiating the infection. Functionally, mediates fusion of the virion and cellular membranes by acting as a class I viral fusion protein. Under the current model, the protein has at least three conformational states: pre-fusion native state, pre-hairpin intermediate state, and post-fusion hairpin state. During viral and target cell membrane fusion, the coiled coil regions (heptad repeats) assume a trimer-of-hairpins structure, positioning the fusion peptide in close proximity to the C-terminal region of the ectodomain. The formation of this structure appears to drive apposition and subsequent fusion of viral and target cell membranes. In terms of biological role, acts as a viral fusion peptide which is unmasked following S2 cleavage occurring upon virus endocytosis. This chain is Spike glycoprotein, found in Bovine coronavirus (strain 98TXSF-110-ENT) (BCoV-ENT).